The chain runs to 381 residues: Dual-specificity RNA methyltransferase RlmN (381 aa).

Residue E96 is the Proton acceptor of the active site. The 241-residue stretch at 102–342 (TDDRGTLCVS…TRTTRGDDID (241 aa)) folds into the Radical SAM core domain. C109 and C345 form a disulfide bridge. Residues C116, C120, and C123 each contribute to the [4Fe-4S] cluster site. Residues 170-171 (GE), S202, 224-226 (SLH), and N302 contribute to the S-adenosyl-L-methionine site. C345 acts as the S-methylcysteine intermediate in catalysis.

The protein belongs to the radical SAM superfamily. RlmN family. The cofactor is [4Fe-4S] cluster.

Its subcellular location is the cytoplasm. The catalysed reaction is adenosine(2503) in 23S rRNA + 2 reduced [2Fe-2S]-[ferredoxin] + 2 S-adenosyl-L-methionine = 2-methyladenosine(2503) in 23S rRNA + 5'-deoxyadenosine + L-methionine + 2 oxidized [2Fe-2S]-[ferredoxin] + S-adenosyl-L-homocysteine. It catalyses the reaction adenosine(37) in tRNA + 2 reduced [2Fe-2S]-[ferredoxin] + 2 S-adenosyl-L-methionine = 2-methyladenosine(37) in tRNA + 5'-deoxyadenosine + L-methionine + 2 oxidized [2Fe-2S]-[ferredoxin] + S-adenosyl-L-homocysteine. In terms of biological role, specifically methylates position 2 of adenine 2503 in 23S rRNA and position 2 of adenine 37 in tRNAs. m2A2503 modification seems to play a crucial role in the proofreading step occurring at the peptidyl transferase center and thus would serve to optimize ribosomal fidelity. This is Dual-specificity RNA methyltransferase RlmN from Pseudomonas putida (strain W619).